A 418-amino-acid polypeptide reads, in one-letter code: MSFLVLPLHHSNETQSSSSALEKSIPEKDLKKPYQLLSKNQFPEKCAVCKNAAIGYHYNVPSCNGCKTFFRRTILNGKRFICMNHKNCLDEIESDESQRLCKGCRFARCIEVGMDSTAIRASVKTVEGKYLLEEVLRKQKNRKIQMQQKDNFLSLIIKQLSHLEDQIEKLHFSTIPDGFEDMRSLSEILLYNPVFDSSRIPNLTPVSNKAPKLICMTYMHSALLAAVEASKTFEFFSKISHEARMILIRHVSLIGSNMMSASFSMHHRKSDELLLPDGTVFGSIGGCLASEVLGEIKYKNQLQQILHAFLRINVDRVEYMILKAILMRNPSVPGLTLDDQLIIENERNQYAKALLEYTILHHGVLSGPARFGSLIAINPIIETQSKKQKDVYVFMKTLSAQRECSHPPKSLFDEVMDS.

The segment at residues 43–121 is a DNA-binding region (nuclear receptor); that stretch reads PEKCAVCKNA…VGMDSTAIRA (79 aa). 2 NR C4-type zinc fingers span residues 46–66 and 82–104; these read CAVCKNAAIGYHYNVPSCNGC and CMNHKNCLDEIESDESQRLCKGC. Residues 174–414 form the NR LBD domain; sequence TIPDGFEDMR…SHPPKSLFDE (241 aa). Positions 403–414 are AF-2; it reads ECSHPPKSLFDE.

Belongs to the nuclear hormone receptor family.

The protein resides in the nucleus. In terms of biological role, transcriptional regulator. Plays a role in modulation of lifespan and immunity. The chain is Nuclear hormone receptor family member nhr-209 from Caenorhabditis elegans.